A 657-amino-acid polypeptide reads, in one-letter code: PAN2-PAN3 deadenylation complex subunit PAN3 (657 aa).

3 disordered regions span residues 1–29 (MASAGKPNIDDGRRGTSSPKLKGRDHAKD), 52–98 (HDPS…SATI), and 115–135 (SRSNAATPQSQPETSTPEWSI). The segment at 27 to 55 (AKDTLCRNVTIYGRCRYEDKGCVFNHDPS) adopts a C3H1-type zinc-finger fold. Residues 52-67 (HDPSRVNDAQHPERSS) show a composition bias toward basic and acidic residues. 2 stretches are compositionally biased toward polar residues: residues 75–98 (DSPSFTPSATPLNGSSGLKKSATI) and 115–132 (SRSNAATPQSQPETSTPE). Residues 259–521 (QTLPNSQLPT…TIDIFISGIS (263 aa)) are pseudokinase domain. ATP is bound by residues R311, 360–367 (DYHPLSKT), and 421–422 (SK). Residues 522–560 (SQLMSTFDSSLHLDDQLISDLSRELENARLVRLLTKLNF) adopt a coiled-coil conformation. A knob domain region spans residues 561-657 (INERPEYEHD…QALLKPARRI (97 aa)).

Belongs to the protein kinase superfamily. PAN3 family. As to quaternary structure, homodimer. Forms a heterotrimer with a catalytic subunit PAN2 to form the poly(A)-nuclease (PAN) deadenylation complex. Interacts (via PAM-2 motif) with poly(A)-binding protein PAB1 (via PABC domain), conferring substrate specificity of the enzyme complex.

It localises to the cytoplasm. In terms of biological role, regulatory subunit of the poly(A)-nuclease (PAN) deadenylation complex, one of two cytoplasmic mRNA deadenylases involved in mRNA turnover. PAN specifically shortens poly(A) tails of RNA and the activity is stimulated by poly(A)-binding protein PAB1. PAN deadenylation is followed by rapid degradation of the shortened mRNA tails by the CCR4-NOT complex. Deadenylated mRNAs are then degraded by two alternative mechanisms, namely exosome-mediated 3'-5' exonucleolytic degradation, or deadenylation-dependent mRNA decaping and subsequent 5'-3' exonucleolytic degradation by XRN1. May also be involved in post-transcriptional maturation of mRNA poly(A) tails. PAN3 acts as a positive regulator for PAN activity, recruiting the catalytic subunit PAN2 to mRNA via its interaction with RNA and with PAB1. The sequence is that of PAN2-PAN3 deadenylation complex subunit PAN3 from Coccidioides immitis (strain RS) (Valley fever fungus).